Consider the following 501-residue polypeptide: Cytochrome P450 90A4 (501 aa).

A helical transmembrane segment spans residues 2-22 (AAAALLLLAAAAAAVVVAMAL). A heme-binding site is contributed by Cys-446.

This sequence belongs to the cytochrome P450 family. It depends on heme as a cofactor. In terms of tissue distribution, highly expressed in shoot apex and inflorenscence. Expressed in roots, stems, leaf blades and leaf sheaths.

The protein localises to the cell membrane. Its pathway is plant hormone biosynthesis; brassinosteroid biosynthesis. Functionally, catalyzes the C23-alpha-hydroxylation step in brassinosteroid biosynthesis. Converts 6-deoxocathasterone to 6-deoxoteasterone in the late C6-oxidation pathway and cathasterone to teasterone (TE) in the early C6-oxidation pathway of brassinolide (BL) biosynthesis. The polypeptide is Cytochrome P450 90A4 (Oryza sativa subsp. japonica (Rice)).